The primary structure comprises 146 residues: VQWSDSERTIINGIFSQLDYDDLGPKAFSRCLIVYPWTQRYFSSFGNLDNAEAIMGNANVAAHGIKVLHGLDRGVKNMDDIMGVYAELSSLHSEKLHVDPDNFKLLSDCITIVVAAKLGNAFTPETQAAFQKFLGAVVMFLGKQYH.

Residues Gln2–His146 form the Globin domain. Heme b contacts are provided by His63 and His92.

The protein belongs to the globin family. In terms of assembly, heterotetramer of two alpha chains and two beta chains. In terms of tissue distribution, red blood cells.

In terms of biological role, involved in oxygen transport from the lung to the various peripheral tissues. The sequence is that of Hemoglobin subunit beta (hbb) from Artedidraco orianae (Barbeled plunderfish).